Reading from the N-terminus, the 514-residue chain is Protein spinster homolog 3 (514 aa).

The disordered stretch occupies residues 1–22 (MSTECLKPQTGGPQSQSLSQGG). Residues 9–21 (QTGGPQSQSLSQG) show a composition bias toward low complexity. The next 12 membrane-spanning stretches (helical) occupy residues 54–74 (VLCY…GVLL), 88–108 (GLLQ…FGYL), 116–136 (AILS…SFIS), 149–169 (FVGT…GDLF), 176–196 (CALA…YVLG), 212–232 (LMPC…PDVP), 264–284 (FVFS…LGFW), 313–333 (LIFG…GAEA), 347–367 (LICA…LILA), 376–396 (VFLA…ADIL), 415–435 (VAHV…SSVL), and 453–473 (SFLC…LTAL). Positions 482 to 514 (ARQPGKGTLDSKDIASRNTESQGLLSGTSTPTE) are disordered. Over residues 497-514 (SRNTESQGLLSGTSTPTE) the composition is skewed to polar residues.

The protein belongs to the major facilitator superfamily. Spinster (TC 2.A.1.49) family.

It localises to the membrane. Sphingolipid transporter. This chain is Protein spinster homolog 3 (Spns3), found in Mus musculus (Mouse).